The chain runs to 547 residues: Eukaryotic translation initiation factor 3 subunit D (547 aa).

2 disordered regions span residues 1–22 and 114–159; these read MANF…PSTS and SVRG…TRDS. Over residues 126–148 the composition is skewed to gly residues; it reads GRGGQRGGFSTRGGRGGARGGYG. Positions 284–298 are RNA gate; the sequence is PLDYITVNENAADPP.

The protein belongs to the eIF-3 subunit D family. As to quaternary structure, component of the eukaryotic translation initiation factor 3 (eIF-3) complex.

The protein localises to the cytoplasm. Functionally, mRNA cap-binding component of the eukaryotic translation initiation factor 3 (eIF-3) complex, which is involved in protein synthesis of a specialized repertoire of mRNAs and, together with other initiation factors, stimulates binding of mRNA and methionyl-tRNAi to the 40S ribosome. The eIF-3 complex specifically targets and initiates translation of a subset of mRNAs involved in cell proliferation. In the eIF-3 complex, eif3d specifically recognizes and binds the 7-methylguanosine cap of a subset of mRNAs. This Cryptococcus neoformans var. neoformans serotype D (strain B-3501A) (Filobasidiella neoformans) protein is Eukaryotic translation initiation factor 3 subunit D.